We begin with the raw amino-acid sequence, 200 residues long: Rho-related protein racH (200 aa).

11–18 (GDMSVGKT) serves as a coordination point for GTP. An Effector region motif is present at residues 33–41 (YVPTVFDNY). GTP is bound by residues 58-62 (DTAGS) and 117-120 (TKLD). The tract at residues 178-200 (EELAKSKKDSKKGDKDSKDCIIQ) is disordered. Cys197 bears the Cysteine methyl ester mark. Residue Cys197 is the site of S-geranylgeranyl cysteine attachment. A propeptide spans 198–200 (IIQ) (removed in mature form).

Belongs to the small GTPase superfamily. Rho family.

The protein localises to the cell membrane. The polypeptide is Rho-related protein racH (racH) (Dictyostelium discoideum (Social amoeba)).